The sequence spans 247 residues: Putative methyltransferase YqeM (247 aa).

It belongs to the methyltransferase superfamily.

Functionally, may be a S-adenosyl-L-methionine (SAM)-dependent methyltransferase. This Bacillus subtilis (strain 168) protein is Putative methyltransferase YqeM (yqeM).